The primary structure comprises 420 residues: Histidine--tRNA ligase (420 aa).

Belongs to the class-II aminoacyl-tRNA synthetase family. As to quaternary structure, homodimer.

The protein localises to the cytoplasm. It catalyses the reaction tRNA(His) + L-histidine + ATP = L-histidyl-tRNA(His) + AMP + diphosphate + H(+). This chain is Histidine--tRNA ligase (hisS), found in Thermotoga maritima (strain ATCC 43589 / DSM 3109 / JCM 10099 / NBRC 100826 / MSB8).